We begin with the raw amino-acid sequence, 51 residues long: Large ribosomal subunit protein eL39 (51 aa).

This sequence belongs to the eukaryotic ribosomal protein eL39 family. Interacts with YIH1.

In Kluyveromyces marxianus (Yeast), this protein is Large ribosomal subunit protein eL39 (RPL39).